Here is a 262-residue protein sequence, read N- to C-terminus: High-affinity zinc uptake system membrane protein ZnuB (262 aa).

7 helical membrane-spanning segments follow: residues 8–28, 54–74, 84–104, 129–149, 179–199, 215–235, and 238–254; these read GWLA…FIVW, INSF…LAWL, TVLN…ISLI, ITIS…WHSI, FTIA…LLII, VIIA…LSVF, and TPAS…LCLI.

This sequence belongs to the ABC-3 integral membrane protein family.

It is found in the cell membrane. Functionally, involved in the high-affinity zinc uptake transport system. In Buchnera aphidicola subsp. Acyrthosiphon pisum (strain APS) (Acyrthosiphon pisum symbiotic bacterium), this protein is High-affinity zinc uptake system membrane protein ZnuB (znuB).